Reading from the N-terminus, the 483-residue chain is Malonate-semialdehyde dehydrogenase 2 (483 aa).

Phe152, Lys176, Glu179, Arg180, and Ser229 together coordinate NAD(+). Residue Cys284 is the Nucleophile of the active site. Glu384 lines the NAD(+) pocket.

Belongs to the aldehyde dehydrogenase family. IolA subfamily. In terms of assembly, homotetramer.

It carries out the reaction 3-oxopropanoate + NAD(+) + CoA + H2O = hydrogencarbonate + acetyl-CoA + NADH + H(+). The catalysed reaction is 2-methyl-3-oxopropanoate + NAD(+) + CoA + H2O = propanoyl-CoA + hydrogencarbonate + NADH + H(+). Its pathway is polyol metabolism; myo-inositol degradation into acetyl-CoA; acetyl-CoA from myo-inositol: step 7/7. Its function is as follows. Catalyzes the oxidation of malonate semialdehyde (MSA) and methylmalonate semialdehyde (MMSA) into acetyl-CoA and propanoyl-CoA, respectively. Is involved in a myo-inositol catabolic pathway. Bicarbonate, and not CO2, is the end-product of the enzymatic reaction. This is Malonate-semialdehyde dehydrogenase 2 from Geobacillus thermodenitrificans (strain NG80-2).